A 335-amino-acid chain; its full sequence is Glycerol-3-phosphate dehydrogenase [NAD(P)+] (335 aa).

Tryptophan 15, arginine 36, and lysine 109 together coordinate NADPH. Residues lysine 109, glycine 137, and serine 139 each contribute to the sn-glycerol 3-phosphate site. Alanine 141 is a binding site for NADPH. Lysine 192, aspartate 245, serine 255, arginine 256, and asparagine 257 together coordinate sn-glycerol 3-phosphate. The active-site Proton acceptor is the lysine 192. Arginine 256 is an NADPH binding site. 2 residues coordinate NADPH: leucine 279 and glutamate 281.

It belongs to the NAD-dependent glycerol-3-phosphate dehydrogenase family.

The protein localises to the cytoplasm. It catalyses the reaction sn-glycerol 3-phosphate + NAD(+) = dihydroxyacetone phosphate + NADH + H(+). The catalysed reaction is sn-glycerol 3-phosphate + NADP(+) = dihydroxyacetone phosphate + NADPH + H(+). It participates in membrane lipid metabolism; glycerophospholipid metabolism. Catalyzes the reduction of the glycolytic intermediate dihydroxyacetone phosphate (DHAP) to sn-glycerol 3-phosphate (G3P), the key precursor for phospholipid synthesis. The polypeptide is Glycerol-3-phosphate dehydrogenase [NAD(P)+] (Beijerinckia indica subsp. indica (strain ATCC 9039 / DSM 1715 / NCIMB 8712)).